The following is a 193-amino-acid chain: Mediator of RNA polymerase II transcription subunit 20 (193 aa).

It belongs to the Mediator complex subunit 20 family. Component of the Mediator complex.

It localises to the nucleus. Component of the Mediator complex, a coactivator involved in the regulated transcription of nearly all RNA polymerase II-dependent genes. Mediator functions as a bridge to convey information from gene-specific regulatory proteins to the basal RNA polymerase II transcription machinery. The Mediator complex, having a compact conformation in its free form, is recruited to promoters by direct interactions with regulatory proteins and serves for the assembly of a functional preinitiation complex with RNA polymerase II and the general transcription factors. This is Mediator of RNA polymerase II transcription subunit 20 (med20) from Schizosaccharomyces pombe (strain 972 / ATCC 24843) (Fission yeast).